The following is a 345-amino-acid chain: Heat stress transcription factor A-2 (345 aa).

Positions 17-30 (GSVAASSSVGSSSS) are enriched in low complexity. The interval 17 to 40 (GSVAASSSVGSSSSPRPMEGLNET) is disordered. Residues 42-136 (PPPFLTKTYE…LLKNIKRRRN (95 aa)) mediate DNA binding. The segment at 150–216 (SCVEVGQYGF…QMMTFLAKAL (67 aa)) is hydrophobic repeat HR-A/B. The Nuclear localization signal signature appears at 231-238 (EKKSLFGL). The short motif at 273 to 282 (EMLFAAAIDD) is the AHA1 element. Lys-315 participates in a covalent cross-link: Glycyl lysine isopeptide (Lys-Gly) (interchain with G-Cter in SUMO). Residues 324-333 (LDWDSQDLHD) carry the AHA2 motif. Residues 334-341 (MVDQMGFL) carry the Nuclear export signal motif.

Belongs to the HSF family. Class A subfamily. Homotrimer. Interacts with SUMO1. Binds to HSBP. Exhibits temperature-dependent phosphorylation. Post-translationally, sumoylated at Lys-315. Sumoylation represses its function.

It localises to the cytoplasm. It is found in the nucleus. In terms of biological role, transcriptional activator that specifically binds DNA sequence 5'-AGAAnnTTCT-3' known as heat shock promoter elements (HSE). Seems to be involved in other environmental stress responses. Activates ascorbate peroxidase 2 (APX2) in addition to several heat shock protein (HSPs). Binds to the promoter of SGIP1 and activates its expression in heat acclimated plants. Involved in the mechanisms necessary for quick response to heat and subsequent heritable transgenerational memory of heat acclimation (global warming) such as early flowering and attenuated immunity; this process includes epigenetic regulation as well as post-transcriptional gene silencing (PTGS). In response to heat, HSFA2 is activated and promotes the expression of REF6 which in turn derepresses HSFA2, thus establishing an inheritable feedback loop able to trigger SGIP1 and subsequent SGIP1-mediated SGS3 degradation; this prevents the biosynthesis of trans-acting siRNA (tasiRNA) and leads to the release of HTT5, which drives early flowering but attenuates immunity. The protein is Heat stress transcription factor A-2 of Arabidopsis thaliana (Mouse-ear cress).